The sequence spans 739 residues: MNIIAIMNDLSAYFKEEPLRELHQELEKEGFRIAYPKDRNDLLKLIENNSRLCGVIFDWDKYNLELSAEISELNKLLPIYAFANTYSTLDVNMSDLRLNVRFFEYALGSAQDIATKIRQSTDQYIDTILPPLTKALFKYVKEEKYTVCTPGHMGGTAFDKSPVGSLFYDFFGENTMRSDISISVSELGSLLDHSGPHRDAEEYIARTFNADRSYIVTNGTSTANKIVGMYSSPAGATILIDRNCHKSLTHLMMMSNVVPVYLRPTRNAYGILGGIPQSEFTRASIEEKVKNTPNATWPVHAVVTNSTYDGLFYNTEYIKNTLDVKSIHFDSAWVPYTNFHPIYQGKAGMSGERVPGKIIYETQSTHKLLAAFSQASMIHVKGEINEETFNEAYMMHTSTSPHYGIVASTETAAAMMKGNAGKRLINGSIERAIRFRKEIRRLRTESDGWFFDVWQPDNIDEVACWPLNPRNEWHGFPNIDNDHMYLDPIKVTLLTPGLSPNGTLEEEGIPASIVSKYLDEHGIIVEKTGPYNLLFLFSIGIDKTKALSLLRALTDFKRVYDLNLRVKNVLPSLYNEAPDFYKEMRIQELAQGIHALVKHHNLPDLMYRAFEVLPKLVMTPHDAFQEEVRGNIEPCALDDMLGKVSANMILPYPPGVPVVMPGEMLTKESRPVLSFLQMLCEIGAHYPGFETDIHGVHRDGATGKYMVVVLKQGADEPGDKPSDTVKKAPGKKPSAAKKS.

Lysine 367 is subject to N6-(pyridoxal phosphate)lysine. Residues 714-726 are compositionally biased toward basic and acidic residues; sequence ADEPGDKPSDTVK. Positions 714-739 are disordered; the sequence is ADEPGDKPSDTVKKAPGKKPSAAKKS. Over residues 728–739 the composition is skewed to basic residues; it reads APGKKPSAAKKS.

This sequence belongs to the Orn/Lys/Arg decarboxylase class-I family. Requires pyridoxal 5'-phosphate as cofactor.

Its subcellular location is the cytoplasm. It catalyses the reaction L-lysine + H(+) = cadaverine + CO2. This chain is Lysine decarboxylase, found in Hafnia alvei.